We begin with the raw amino-acid sequence, 450 residues long: Cyclic GMP-AMP phosphodiesterase SMPDL3A (450 aa).

The first 22 residues, 1–22 (MARLGALVCCLLAAWHCRPGLG), serve as a signal peptide directing secretion. Zn(2+) contacts are provided by D42 and H44. A disulfide bond links C59 and C78. Zn(2+) is bound at residue D107. Residue H111 participates in ATP binding. N-linked (GlcNAc...) asparagine glycosylation is found at N124 and N128. N148 is a Zn(2+) binding site. Positions 148 and 149 each coordinate ATP. N-linked (GlcNAc...) asparagine glycans are attached at residues N219 and N235. Zn(2+)-binding residues include H249, H290, and H292. N-linked (GlcNAc...) asparagine glycans are attached at residues N353 and N370. 2 cysteine pairs are disulfide-bonded: C417–C421 and C427–C440.

The protein belongs to the acid sphingomyelinase family. Monomer. Homodimer; homodimerizes following 2',3'-cGAMP-binding. It depends on Zn(2+) as a cofactor.

The protein localises to the secreted. The enzyme catalyses 2',3'-cGAMP + H2O = 5'-pGpA(2'-5') + H(+). It carries out the reaction 5'-pGpA(2'-5') + H2O = 5'-GpA(2'-5') + phosphate. It catalyses the reaction a ribonucleoside 5'-triphosphate + H2O = a ribonucleoside 5'-diphosphate + phosphate + H(+). The catalysed reaction is ATP + H2O = ADP + phosphate + H(+). Cyclic-nucleotide phosphodiesterase that acts as a negative regulator of innate immunity by mediating degradation of 2',3'-cGAMP, thereby inhibiting the cGAS-STING signaling. Specifically linearizes 2',3'-cGAMP into 2'5'-bond pGpA and further hydrolyzes pGpA to produce GpA. Also has in vitro nucleotide phosphodiesterase activity with nucleoside triphosphates, such as ATP. Has in vitro activity with p-nitrophenyl-TMP. Has lower activity with nucleoside diphosphates, and no activity with nucleoside monophosphates. Has in vitro activity with CDP-choline, giving rise to CMP and phosphocholine. Has in vitro activity with CDP-ethanolamine. Does not have sphingomyelin phosphodiesterase activity. The chain is Cyclic GMP-AMP phosphodiesterase SMPDL3A (SMPDL3A) from Bos taurus (Bovine).